Here is a 175-residue protein sequence, read N- to C-terminus: CASP-like protein 2C1 (175 aa).

The Cytoplasmic segment spans residues 1–7; the sequence is MVRLRET. The helical transmembrane segment at 8-28 threads the bilayer; sequence EVILRLCIVFFILLSSCLIGL. The Extracellular segment spans residues 29–51; the sequence is DSQTKEIAYIHKKVSFRYLLALE. Residues 52–72 form a helical membrane-spanning segment; that stretch reads AELYINVVVAAYNLVQIGLGW. Over 73–91 the chain is Cytoplasmic; it reads YNVEQKTSNPKWFSYLLDQ. The helical transmembrane segment at 92 to 112 threads the bilayer; sequence TAAYVVFAGTSAAAQHSLLVV. The Extracellular segment spans residues 113–136; sequence TGSRELQWMKWCYKFTRFCFQMGS. The chain crosses the membrane as a helical span at residues 137–157; it reads AIILNYIAAALMVLLSSISAF. The Cytoplasmic segment spans residues 158 to 175; the sequence is NLFRLYSPKRFFSFKSSS.

The protein belongs to the Casparian strip membrane proteins (CASP) family. As to quaternary structure, homodimer and heterodimers.

It is found in the cell membrane. This chain is CASP-like protein 2C1, found in Arabidopsis lyrata subsp. lyrata (Lyre-leaved rock-cress).